Here is a 20-residue protein sequence, read N- to C-terminus: Trypsin inhibitor (20 aa).

Residues 1 to 20 form a disordered region; it reads APSDTTIAETLTITEEFFPD.

In terms of tissue distribution, hemolymph.

It localises to the secreted. The protein localises to the extracellular space. Inhibits trypsin stoichiometrically. Also inhibits chymotrypsin very weakly. This Mythimna unipuncta (Armyworm moth) protein is Trypsin inhibitor.